The chain runs to 179 residues: Peptide deformylase (179 aa).

The Fe cation site is built by Cys103 and His145. Residue Glu146 is part of the active site. Position 149 (His149) interacts with Fe cation.

This sequence belongs to the polypeptide deformylase family. It depends on Fe(2+) as a cofactor.

It carries out the reaction N-terminal N-formyl-L-methionyl-[peptide] + H2O = N-terminal L-methionyl-[peptide] + formate. Its function is as follows. Removes the formyl group from the N-terminal Met of newly synthesized proteins. Requires at least a dipeptide for an efficient rate of reaction. N-terminal L-methionine is a prerequisite for activity but the enzyme has broad specificity at other positions. The protein is Peptide deformylase of Leptospira biflexa serovar Patoc (strain Patoc 1 / Ames).